A 159-amino-acid polypeptide reads, in one-letter code: Cyclic pyranopterin monophosphate synthase (159 aa).

Substrate contacts are provided by residues 75 to 77 (LCH) and 113 to 114 (ME). The active site involves D128.

The protein belongs to the MoaC family. Homohexamer; trimer of dimers.

It carries out the reaction (8S)-3',8-cyclo-7,8-dihydroguanosine 5'-triphosphate = cyclic pyranopterin phosphate + diphosphate. The protein operates within cofactor biosynthesis; molybdopterin biosynthesis. Functionally, catalyzes the conversion of (8S)-3',8-cyclo-7,8-dihydroguanosine 5'-triphosphate to cyclic pyranopterin monophosphate (cPMP). The sequence is that of Cyclic pyranopterin monophosphate synthase from Aliivibrio salmonicida (strain LFI1238) (Vibrio salmonicida (strain LFI1238)).